Here is a 1391-residue protein sequence, read N- to C-terminus: DNA-directed RNA polymerase subunit beta' (1391 aa).

Zn(2+)-binding residues include C72, C74, C87, and C90. D462, D464, and D466 together coordinate Mg(2+). Residues C816, C890, C897, and C900 each coordinate Zn(2+).

The protein belongs to the RNA polymerase beta' chain family. The RNAP catalytic core consists of 2 alpha, 1 beta, 1 beta' and 1 omega subunit. When a sigma factor is associated with the core the holoenzyme is formed, which can initiate transcription. The cofactor is Mg(2+). It depends on Zn(2+) as a cofactor.

It carries out the reaction RNA(n) + a ribonucleoside 5'-triphosphate = RNA(n+1) + diphosphate. In terms of biological role, DNA-dependent RNA polymerase catalyzes the transcription of DNA into RNA using the four ribonucleoside triphosphates as substrates. This Neisseria gonorrhoeae (strain ATCC 700825 / FA 1090) protein is DNA-directed RNA polymerase subunit beta'.